The chain runs to 626 residues: Miltiradiene synthase KSL1, chloroplastic (626 aa).

The transit peptide at 1 to 51 directs the protein to the chloroplast; the sequence is MSLAFNLRVIPFSGHTIQSRRGLFPVHESPMITTKPFAAVKCSLTTSTDLM. Residues aspartate 329, aspartate 333, asparagine 473, and glutamate 481 each contribute to the Mg(2+) site. The DDXXD motif signature appears at 329 to 333; the sequence is DDFFD.

Belongs to the terpene synthase family. Mg(2+) serves as cofactor. In terms of tissue distribution, highly expressed in roots, and, at low levels, in stems and leaves.

It localises to the plastid. It is found in the chloroplast. It carries out the reaction (+)-copalyl diphosphate = miltiradiene + diphosphate. It functions in the pathway secondary metabolite biosynthesis; terpenoid biosynthesis. Functionally, involved in the biosynthesis of ent-kaurene diterpenoids natural products such as oridonin, miltiradiene, eriocalyxin B and nezukol, known to exhibit antitumor, anti-inflammatory and antibacterial activities. Catalyzes the conversion of (+)-copalyl diphosphate ((+)-CPP) to miltiradiene. This chain is Miltiradiene synthase KSL1, chloroplastic, found in Isodon rubescens (Rabdosia rubescens).